The sequence spans 510 residues: tRNA(Ile)-lysidine synthase (510 aa).

Residue 32 to 37 coordinates ATP; it reads SGGLDS.

It belongs to the tRNA(Ile)-lysidine synthase family.

The protein resides in the cytoplasm. It carries out the reaction cytidine(34) in tRNA(Ile2) + L-lysine + ATP = lysidine(34) in tRNA(Ile2) + AMP + diphosphate + H(+). Ligates lysine onto the cytidine present at position 34 of the AUA codon-specific tRNA(Ile) that contains the anticodon CAU, in an ATP-dependent manner. Cytidine is converted to lysidine, thus changing the amino acid specificity of the tRNA from methionine to isoleucine. This Blochmanniella pennsylvanica (strain BPEN) protein is tRNA(Ile)-lysidine synthase.